The sequence spans 254 residues: N(G),N(G)-dimethylarginine dimethylaminohydrolase (254 aa).

Substrate is bound by residues leucine 18, aspartate 60, 65-66, arginine 85, and arginine 132; that span reads ED. The active-site Proton donor is histidine 162. Histidine 162 provides a ligand contact to Zn(2+). Isoleucine 243 provides a ligand contact to substrate. Zn(2+) is bound at residue cysteine 249. Cysteine 249 acts as the Nucleophile in catalysis.

The protein belongs to the DDAH family. In terms of assembly, homodimer.

It catalyses the reaction N(omega),N(omega)-dimethyl-L-arginine + H2O = dimethylamine + L-citrulline. The enzyme catalyses N(omega)-methyl-L-arginine + H2O = L-citrulline + methylamine. Inhibited by zinc ions. Competitively inhibited by lysine. Hydrolyzes N(G),N(G)-dimethyl-L-arginine (ADMA) and N(G)-monomethyl-L-arginine (MMA). The polypeptide is N(G),N(G)-dimethylarginine dimethylaminohydrolase (Pseudomonas aeruginosa (strain ATCC 15692 / DSM 22644 / CIP 104116 / JCM 14847 / LMG 12228 / 1C / PRS 101 / PAO1)).